Reading from the N-terminus, the 324-residue chain is NADH-ubiquinone oxidoreductase chain 1 (324 aa).

Transmembrane regions (helical) follow at residues 9–29 (LINP…LTLI), 75–95 (FLFL…WAPM), 106–126 (LGIL…LGSG), 146–166 (ISYE…SGGY), 177–197 (SIWL…STLA), 228–248 (LFFL…AVLF), 259–279 (ELTT…FLWV), and 299–319 (FLPL…ALAG).

Belongs to the complex I subunit 1 family.

It is found in the mitochondrion inner membrane. The catalysed reaction is a ubiquinone + NADH + 5 H(+)(in) = a ubiquinol + NAD(+) + 4 H(+)(out). Core subunit of the mitochondrial membrane respiratory chain NADH dehydrogenase (Complex I) that is believed to belong to the minimal assembly required for catalysis. Complex I functions in the transfer of electrons from NADH to the respiratory chain. The immediate electron acceptor for the enzyme is believed to be ubiquinone. The chain is NADH-ubiquinone oxidoreductase chain 1 (MT-ND1) from Carassius auratus (Goldfish).